Here is a 251-residue protein sequence, read N- to C-terminus: Pyrroloquinoline-quinone synthase (251 aa).

It belongs to the PqqC family.

The catalysed reaction is 6-(2-amino-2-carboxyethyl)-7,8-dioxo-1,2,3,4,7,8-hexahydroquinoline-2,4-dicarboxylate + 3 O2 = pyrroloquinoline quinone + 2 H2O2 + 2 H2O + H(+). It participates in cofactor biosynthesis; pyrroloquinoline quinone biosynthesis. Ring cyclization and eight-electron oxidation of 3a-(2-amino-2-carboxyethyl)-4,5-dioxo-4,5,6,7,8,9-hexahydroquinoline-7,9-dicarboxylic-acid to PQQ. This is Pyrroloquinoline-quinone synthase from Klebsiella pneumoniae (strain 342).